Consider the following 677-residue polypeptide: Transmembrane and coiled-coil domain-containing protein 3 (677 aa).

A signal peptide spans 1–22 (MKVLGRSFFWVLFPVLPWAVQA). Positions 124–204 (DYKDVVNMKE…EEEIEEHAFD (81 aa)) form a coiled coil. Asparagine 206 and asparagine 230 each carry an N-linked (GlcNAc...) asparagine glycan. Helical transmembrane passes span 286–306 (WLCT…GVLL), 317–337 (IVQV…LVGL), 350–370 (ISLQ…LLWG), 416–436 (VLLG…AVMP), 456–476 (ILVL…LCLV), 498–518 (EILI…TELL), 554–574 (FLAI…FVAY), 578–598 (VLVF…ALVL), 608–628 (YIKW…FVLG), and 640–660 (EVYL…PVLW).

Belongs to the monovalent cation:proton antiporter 2 (CPA2) transporter (TC 2.A.37) family. In terms of tissue distribution, expressed in the cornea, lens capsule and choroid-retinal pigment epithelium (at protein level).

It localises to the membrane. Probable Na(+)/H(+) antiporter. In Homo sapiens (Human), this protein is Transmembrane and coiled-coil domain-containing protein 3 (TMCO3).